The primary structure comprises 349 residues: Fe(3+) ions import ATP-binding protein FbpC (349 aa).

The 231-residue stretch at 7–237 folds into the ABC transporter domain; the sequence is LVLKNVTKAF…PNSLFLANFM (231 aa). Residue 39–46 coordinates ATP; the sequence is GPSGCGKT.

This sequence belongs to the ABC transporter superfamily. Fe(3+) ion importer (TC 3.A.1.10) family. The complex is composed of two ATP-binding proteins (FbpC), two transmembrane proteins (FbpB) and a solute-binding protein (FbpA).

The protein localises to the cell inner membrane. It catalyses the reaction Fe(3+)(out) + ATP + H2O = Fe(3+)(in) + ADP + phosphate + H(+). In terms of biological role, part of the ABC transporter complex FbpABC involved in Fe(3+) ions import. Responsible for energy coupling to the transport system. In Pasteurella multocida (strain Pm70), this protein is Fe(3+) ions import ATP-binding protein FbpC.